Consider the following 332-residue polypeptide: Fructose-1,6-bisphosphatase class 1 (332 aa).

Mg(2+)-binding residues include Glu89, Asp110, Leu112, and Asp113. Residues 113–116 (DGSS), Asn206, Tyr239, 257–259 (YLY), and Lys269 contribute to the substrate site. Residue Glu275 participates in Mg(2+) binding.

This sequence belongs to the FBPase class 1 family. As to quaternary structure, homotetramer. Mg(2+) is required as a cofactor.

The protein resides in the cytoplasm. It carries out the reaction beta-D-fructose 1,6-bisphosphate + H2O = beta-D-fructose 6-phosphate + phosphate. It participates in carbohydrate biosynthesis; gluconeogenesis. This is Fructose-1,6-bisphosphatase class 1 from Erwinia tasmaniensis (strain DSM 17950 / CFBP 7177 / CIP 109463 / NCPPB 4357 / Et1/99).